The chain runs to 497 residues: Indoleacetaldoxime dehydratase (497 aa).

A helical transmembrane segment spans residues 2-20 (EMILSISLCLTTLITLLLL). Cys-439 contributes to the heme binding site.

It belongs to the cytochrome P450 family.

It is found in the membrane. It catalyses the reaction (E)-(indol-3-yl)acetaldehyde oxime = (indol-3-yl)acetonitrile + H2O. Involved in the biosynthesis of the indole-derived phytoalexin camalexin. Catalyzes the conversion of indole-3-acetaldoxime to indole-3-acetonitrile. Required for resistance to A.brassicicola and B.cinerea. This is Indoleacetaldoxime dehydratase (CYP71A13) from Arabidopsis thaliana (Mouse-ear cress).